The sequence spans 388 residues: uncharacterized protein (388 aa).

A coiled-coil region spans residues 68–96 (KVDRMSEEEERMAIATRKAKEVAKELSET). The disordered stretch occupies residues 162–388 (GSHPLVREFN…PPQQDWFDSV (227 aa)). Composition is skewed to basic and acidic residues over residues 166-176 (LVREFNGEKPP) and 196-208 (ATDKKTGSKQSDK). Positions 233–251 (GVKHQHAIRRDDRHRHGMR) are enriched in basic residues. 2 stretches are compositionally biased toward low complexity: residues 265 to 279 (QQQQCPVQGQQSRGQ) and 293 to 346 (QRRP…QRPA).

This is an uncharacterized protein from Frog virus 3 (isolate Goorha) (FV-3).